We begin with the raw amino-acid sequence, 514 residues long: 1-pyrroline-5-carboxylate dehydrogenase (514 aa).

Catalysis depends on residues Glu286 and Cys320.

This sequence belongs to the aldehyde dehydrogenase family. RocA subfamily.

It carries out the reaction L-glutamate 5-semialdehyde + NAD(+) + H2O = L-glutamate + NADH + 2 H(+). Its pathway is amino-acid degradation; L-proline degradation into L-glutamate; L-glutamate from L-proline: step 2/2. This Staphylococcus aureus (strain MRSA252) protein is 1-pyrroline-5-carboxylate dehydrogenase.